Here is a 222-residue protein sequence, read N- to C-terminus: MADS-box transcription factor 26 (222 aa).

The region spanning 1-61 (MARGKVQLRR…GKLYDLATTG (61 aa)) is the MADS-box domain. In terms of domain architecture, K-box spans 85–176 (RMDPKQEAMV…QEKIVEQNGL (92 aa)).

The protein localises to the nucleus. Functionally, probable transcription factor. The polypeptide is MADS-box transcription factor 26 (MADS26) (Oryza sativa subsp. indica (Rice)).